The sequence spans 239 residues: Fatty acid metabolism regulator protein (239 aa).

The region spanning 6 to 74 is the HTH gntR-type domain; the sequence is QSPAGFAEEY…HGKPTKVNNF (69 aa). The H-T-H motif DNA-binding region spans 34-53; the sequence is ERELSELIGVTRTTLREVLQ.

Homodimer.

The protein localises to the cytoplasm. Functionally, multifunctional regulator of fatty acid metabolism. In Serratia proteamaculans (strain 568), this protein is Fatty acid metabolism regulator protein.